The primary structure comprises 389 residues: Flap endonuclease 1 (389 aa).

The tract at residues 1-105 (MGIKGLTALL…GELAKRKDKR (105 aa)) is N-domain. Aspartate 34 serves as a coordination point for Mg(2+). Arginine 71 lines the DNA pocket. The Mg(2+) site is built by aspartate 87, glutamate 159, glutamate 161, aspartate 180, and aspartate 182. The I-domain stretch occupies residues 123–254 (EVEKLSKRTV…KTALKLIKEH (132 aa)). A DNA-binding site is contributed by glutamate 159. Residues glycine 232 and aspartate 234 each coordinate DNA. Aspartate 234 contributes to the Mg(2+) binding site. The tract at residues 338–346 (SQNRLESFF) is interaction with PCNA. The interval 356–389 (IGKRKVEETKSGKGSKAGLNKKSKGVSGYKSKKT) is disordered. Residues 374–389 (LNKKSKGVSGYKSKKT) are compositionally biased toward basic residues.

The protein belongs to the XPG/RAD2 endonuclease family. FEN1 subfamily. In terms of assembly, interacts with PCNA. Three molecules of FEN1 bind to one PCNA trimer with each molecule binding to one PCNA monomer. PCNA stimulates the nuclease activity without altering cleavage specificity. Requires Mg(2+) as cofactor. Phosphorylated. Phosphorylation upon DNA damage induces relocalization to the nuclear plasma.

It is found in the nucleus. The protein resides in the nucleolus. Its subcellular location is the nucleoplasm. It localises to the mitochondrion. In terms of biological role, structure-specific nuclease with 5'-flap endonuclease and 5'-3' exonuclease activities involved in DNA replication and repair. During DNA replication, cleaves the 5'-overhanging flap structure that is generated by displacement synthesis when DNA polymerase encounters the 5'-end of a downstream Okazaki fragment. It enters the flap from the 5'-end and then tracks to cleave the flap base, leaving a nick for ligation. Also involved in the long patch base excision repair (LP-BER) pathway, by cleaving within the apurinic/apyrimidinic (AP) site-terminated flap. Acts as a genome stabilization factor that prevents flaps from equilibrating into structures that lead to duplications and deletions. Also possesses 5'-3' exonuclease activity on nicked or gapped double-stranded DNA, and exhibits RNase H activity. Also involved in replication and repair of rDNA and in repairing mitochondrial DNA. The polypeptide is Flap endonuclease 1 (Ostreococcus tauri).